The chain runs to 387 residues: EARP-interacting protein homolog (387 aa).

5 WD repeats span residues 132 to 172, 182 to 222, 226 to 266, 270 to 310, and 345 to 385; these read TAHG…SKAV, KGQL…QIYC, AHGQ…DPVK, EHSH…SEPF, and EHED…KYHI.

The protein belongs to the WD repeat EIPR1 family.

The sequence is that of EARP-interacting protein homolog from Gekko japonicus (Schlegel's Japanese gecko).